Here is a 574-residue protein sequence, read N- to C-terminus: Streptolysin O (574 aa).

The N-terminal stretch at 1 to 36 (MKDMSNKKIFKKYSRVAGLLTAALIVGNLVTANADS) is a signal peptide. The span at 37-52 (NKQNTANTETTTTNEQ) shows a compositional bias: low complexity. 2 disordered regions span residues 37–64 (NKQN…TTEK) and 84–111 (KEMP…HTEE). Positions 53–64 (PKPESSELTTEK) are enriched in basic and acidic residues. The next 4 beta stranded transmembrane spans lie at 263 to 276 (KSQI…NSKI), 283 to 292 (IDFKSISKGE), 361 to 370 (SNDVEAAFSA), and 378 to 390 (KTNG…LENS). The Conserved undecapeptide motif lies at 532 to 542 (ECTGLAWEWWR). Positions 564 to 565 (TL) match the Cholesterol binding motif.

The protein belongs to the cholesterol-dependent cytolysin family. As to quaternary structure, homooligomeric pore complex of 35 to 50 subunits; when inserted in the host membrane.

Its subcellular location is the secreted. It localises to the host cell membrane. Its function is as follows. A cholesterol-dependent toxin that causes cytolysis by forming pores in cholesterol containing host membranes. After binding to target membranes, the protein undergoes a major conformation change, leading to its insertion in the host membrane and formation of an oligomeric pore complex. Cholesterol is required for binding to host membranes, membrane insertion and pore formation; cholesterol binding is mediated by a Thr-Leu pair in the C-terminus. Can be reversibly inactivated by oxidation. The protein is Streptolysin O (slo) of Streptococcus dysgalactiae subsp. equisimilis (Streptococcus equisimilis).